The chain runs to 187 residues: UPF0301 protein ETA_28320 (187 aa).

This sequence belongs to the UPF0301 (AlgH) family.

In Erwinia tasmaniensis (strain DSM 17950 / CFBP 7177 / CIP 109463 / NCPPB 4357 / Et1/99), this protein is UPF0301 protein ETA_28320.